A 504-amino-acid polypeptide reads, in one-letter code: Anaerobic nitric oxide reductase transcription regulator NorR (504 aa).

4-aspartylphosphate is present on Asp57. Positions 187-416 constitute a Sigma-54 factor interaction domain; it reads MIGLSPGMTQ…LEHAIHRAVV (230 aa). ATP contacts are provided by residues 215 to 222 and 278 to 287; these read GETGTGKE and ADNGTLFLDE. The H-T-H motif DNA-binding region spans 479-498; it reads WAACARMLETDVANLHRLAK.

It participates in nitrogen metabolism; nitric oxide reduction. In terms of biological role, required for the expression of anaerobic nitric oxide (NO) reductase, acts as a transcriptional activator for at least the norVW operon. Activation also requires sigma-54. This is Anaerobic nitric oxide reductase transcription regulator NorR from Shigella dysenteriae serotype 1 (strain Sd197).